We begin with the raw amino-acid sequence, 189 residues long: MLEKLKSTLEKSPVIKKGEYHYFVSPVTDGIPLTEPNLLMEIVDAIEKKFDLEDIDKIVCIEAMGIHLATALSIKTGIPFVVIRKKKYGLPGEVEIRQVTGYGESNLYVNGVNSGDKILVIDDVVSTGGTLISVINALKKISADIKYVIAVVEKGEGRKKVEKETGTKVNTLVKVDVIDGEVKIINNEV.

It belongs to the purine/pyrimidine phosphoribosyltransferase family. Archaeal HPRT subfamily. In terms of assembly, homodimer.

It localises to the cytoplasm. It catalyses the reaction IMP + diphosphate = hypoxanthine + 5-phospho-alpha-D-ribose 1-diphosphate. The catalysed reaction is GMP + diphosphate = guanine + 5-phospho-alpha-D-ribose 1-diphosphate. It functions in the pathway purine metabolism; IMP biosynthesis via salvage pathway; IMP from hypoxanthine: step 1/1. Catalyzes a salvage reaction resulting in the formation of IMP that is energically less costly than de novo synthesis. This Methanothermus fervidus (strain ATCC 43054 / DSM 2088 / JCM 10308 / V24 S) protein is Hypoxanthine/guanine phosphoribosyltransferase.